A 193-amino-acid polypeptide reads, in one-letter code: RNA polymerase sigma-H factor (193 aa).

The short motif at 49 to 62 is the Polymerase core binding element; that stretch reads DVAQEAFIKAYRAL. A DNA-binding region (H-T-H motif) is located at residues 157–176; sequence YEDIATVMQCPVGTVRSRIF.

Belongs to the sigma-70 factor family. ECF subfamily.

Sigma factors are initiation factors that promote the attachment of RNA polymerase to specific initiation sites and are then released. This sigma factor regulates genes such as algD, involved in alginate biosynthesis. The sequence is that of RNA polymerase sigma-H factor (algU) from Pseudomonas aeruginosa (strain ATCC 15692 / DSM 22644 / CIP 104116 / JCM 14847 / LMG 12228 / 1C / PRS 101 / PAO1).